The sequence spans 360 residues: Membrane-bound lytic murein transglycosylase C (360 aa).

The signal sequence occupies residues Met1–Ser16. Cys17 carries the N-palmitoyl cysteine lipid modification. Cys17 carries the S-diacylglycerol cysteine lipid modification.

This sequence belongs to the transglycosylase Slt family.

Its subcellular location is the cell outer membrane. It catalyses the reaction Exolytic cleavage of the (1-&gt;4)-beta-glycosidic linkage between N-acetylmuramic acid (MurNAc) and N-acetylglucosamine (GlcNAc) residues in peptidoglycan, from either the reducing or the non-reducing ends of the peptidoglycan chains, with concomitant formation of a 1,6-anhydrobond in the MurNAc residue.. Its function is as follows. Murein-degrading enzyme. May play a role in recycling of muropeptides during cell elongation and/or cell division. The sequence is that of Membrane-bound lytic murein transglycosylase C from Salmonella typhi.